The following is a 120-amino-acid chain: Large ribosomal subunit protein uL18 (120 aa).

This sequence belongs to the universal ribosomal protein uL18 family. As to quaternary structure, part of the 50S ribosomal subunit; part of the 5S rRNA/L5/L18/L25 subcomplex. Contacts the 5S and 23S rRNAs.

Functionally, this is one of the proteins that bind and probably mediate the attachment of the 5S RNA into the large ribosomal subunit, where it forms part of the central protuberance. This Methylobacterium sp. (strain 4-46) protein is Large ribosomal subunit protein uL18.